Reading from the N-terminus, the 374-residue chain is RNA polymerase sigma factor SigA (374 aa).

Positions 141–211 are sigma-70 factor domain-2; sequence LAEANLRLVV…TRAIADQART (71 aa). The short motif at 165-168 is the Interaction with polymerase core subunit RpoC element; the sequence is DLIQ. The tract at residues 220-296 is sigma-70 factor domain-3; sequence ETINKLIRVQ…DQDATSPSDH (77 aa). A sigma-70 factor domain-4 region spans residues 309 to 362; the sequence is VLDTLTDREENVLRLRFGLDDGRTRTLEEVGRVFGVTRERIRQIEAKALRKLRH. The H-T-H motif DNA-binding region spans 335-354; that stretch reads LEEVGRVFGVTRERIRQIEA.

It belongs to the sigma-70 factor family. RpoD/SigA subfamily. Interacts transiently with the RNA polymerase catalytic core.

Its subcellular location is the cytoplasm. Sigma factors are initiation factors that promote the attachment of RNA polymerase to specific initiation sites and are then released. This sigma factor is the primary sigma factor during exponential growth. The protein is RNA polymerase sigma factor SigA of Listeria monocytogenes serovar 1/2a (strain ATCC BAA-679 / EGD-e).